Here is a 216-residue protein sequence, read N- to C-terminus: Peroxiredoxin (216 aa).

The Thioredoxin domain occupies 2-158 (IVIGEKFPEV…ILRLVKALKI (157 aa)). Residue cysteine 46 is the Cysteine sulfenic acid (-SOH) intermediate of the active site. Arginine 121 lines the substrate pocket. A disulfide bridge links cysteine 205 with cysteine 211.

Belongs to the peroxiredoxin family. Prx6 subfamily. As to quaternary structure, homodecamer. Pentamer of dimers that assemble into a ring structure.

It localises to the cytoplasm. It catalyses the reaction a hydroperoxide + [thioredoxin]-dithiol = an alcohol + [thioredoxin]-disulfide + H2O. Its function is as follows. Thiol-specific peroxidase that catalyzes the reduction of hydrogen peroxide and organic hydroperoxides to water and alcohols, respectively. Plays a role in cell protection against oxidative stress by detoxifying peroxides. This chain is Peroxiredoxin, found in Pyrococcus furiosus (strain ATCC 43587 / DSM 3638 / JCM 8422 / Vc1).